Here is an 887-residue protein sequence, read N- to C-terminus: Cytoplasmic aconitate hydratase (887 aa).

Residues Q84 and 204–206 (DSH) contribute to the substrate site. 3 residues coordinate [4Fe-4S] cluster: C436, C502, and C505. Substrate-binding positions include R535, R540, R697, and 777–778 (SR).

The protein belongs to the aconitase/IPM isomerase family. Interacts with gex-3. It depends on [4Fe-4S] cluster as a cofactor.

The protein localises to the cytoplasm. The protein resides in the cytosol. It carries out the reaction citrate = D-threo-isocitrate. Functionally, catalyzes the isomerization of citrate to isocitrate via cis-aconitate. Has probably no RNA-binding activity. This is Cytoplasmic aconitate hydratase (aco-1) from Caenorhabditis elegans.